The sequence spans 116 residues: Iron-sulfur cluster insertion protein ErpA (116 aa).

3 residues coordinate iron-sulfur cluster: Cys-44, Cys-108, and Cys-110.

The protein belongs to the HesB/IscA family. In terms of assembly, homodimer. The cofactor is iron-sulfur cluster.

Required for insertion of 4Fe-4S clusters for at least IspG. This is Iron-sulfur cluster insertion protein ErpA from Shewanella loihica (strain ATCC BAA-1088 / PV-4).